The primary structure comprises 380 residues: Palmitoyltransferase ZDHHC20 (380 aa).

The Cytoplasmic portion of the chain corresponds to M1–V14. Residues G15 to V35 traverse the membrane as a helical segment. The Lumenal portion of the chain corresponds to E36–V53. A helical membrane pass occupies residues Y54–F74. At T75 to K169 the chain is on the cytoplasmic side. The region spanning R126 to L176 is the DHHC domain. C128 and C131 together coordinate Zn(2+). Substrate-binding positions include K135 and H140–S143. Zn(2+) contacts are provided by H141, C142, C145, C148, and H155. Residue C156 is the S-palmitoyl cysteine intermediate of the active site. Zn(2+) is bound at residue C162. A helical membrane pass occupies residues F170 to L190. At E191–K222 the chain is on the lumenal side. Residues F223–H246 form a helical membrane-spanning segment. Topologically, residues C247 to N380 are cytoplasmic. Residues S320, S345, and S354 each carry the phosphoserine modification.

The protein belongs to the DHHC palmitoyltransferase family. In terms of processing, autopalmitoylated (in vitro). In terms of tissue distribution, highest levels in lung.

It is found in the golgi apparatus membrane. It localises to the cell membrane. The protein localises to the cytoplasm. The protein resides in the perinuclear region. Its subcellular location is the endoplasmic reticulum membrane. It is found in the endoplasmic reticulum-Golgi intermediate compartment membrane. The enzyme catalyses L-cysteinyl-[protein] + hexadecanoyl-CoA = S-hexadecanoyl-L-cysteinyl-[protein] + CoA. It catalyses the reaction L-cysteinyl-[protein] + tetradecanoyl-CoA = S-tetradecanoyl-L-cysteinyl-[protein] + CoA. The catalysed reaction is L-cysteinyl-[protein] + octadecanoyl-CoA = S-octadecanoyl-L-cysteinyl-[protein] + CoA. Palmitoyltransferase that could catalyze the addition of palmitate onto various protein substrates. Catalyzes palmitoylation of Cys residues in the cytoplasmic C-terminus of EGFR, and modulates the duration of EGFR signaling by modulating palmitoylation-dependent EGFR internalization and degradation. Has a preference for acyl-CoA with C16 fatty acid chains. Can also utilize acyl-CoA with C14 and C18 fatty acid chains. May palmitoylate CALHM1 subunit of gustatory voltage-gated ion channels and modulate channel gating and kinetics. The polypeptide is Palmitoyltransferase ZDHHC20 (Mus musculus (Mouse)).